The chain runs to 1229 residues: MTSNRKNENEIINALSIPTVSNPSTQMNLSPDARIEDSLCVAEVNNIDPFVSASTVQTGINIAGRILGVLGVPFAGQLASFYSFLVGELWPSGRDPWEIFLEHVEQLIRQQVTENTRNTAIARLEGLGRGYRSYQQALETWLDNRNDARSRSIILERYVALELDITTAIPLFRIRNEEVPLLMVYAQAANLHLLLLRDASLFGSEWGMASSDVNQYYQEQIRYTEEYSNHCVQWYNTGLNNLRGTNAESWLRYNQFRRDLTLGVLDLVALFPSYDTRTYPINTSAQLTREIYTDPIGRTNAPSGFASTNWFNNNAPSFSAIEAAIFRPPHLLDFPEQLTIYSASSRWSSTQHMNYWVGHRLNFRPIGGTLNTSTQGLTNNTSINPVTLQFTSRDVYRTESNAGTNILFTTPVNGVPWARFNFINPQNIYERGATTYSQPYQGVGIQLFDSETELPPETTERPNYESYSHRLSHIGLIIGNTLRAPVYSWTHRSADRTNTIGPNRITQIPLVKALNLHSGVTVVGGPGFTGGDILRRTNTGTFGDIRLNINVPLSQRYRVRIRYASTTDLQFFTRINGTTVNIGNFSRTMNRGDNLEYRSFRTAGFSTPFNFLNAQSTFTLGAQSFSNQEVYIDRVEFVPAEVTFEAEYDLERAQKAVNALFTSTNPRRLKTDVTDYHIDQVSNMVACLSDEFCLDEKRELFEKVKYAKRLSDERNLLQDPNFTFISGQLSFASIDGQSNFPSINELSEHGWWGSANVTIQEGNDVFKENYVTLPGTFNECYPNYLYQKIGESELKAYTRYQLRGYIEDSQDLEIYLIRYNAKHETLDVPGTDSLWPLSVESPIGRCGEPNRCAPHFEWNPDLDCSCRDGERCAHHSHHFTLDIDVGCTDLHENLGVWVVFKIKTQEGYARLGNLEFIEEKPLIGEALSRVKRAEKKWRDKREKLQLETKRVYTEAKEAVDALFVDSQYDQLQADTNIGMIHAADKLVHRIREAYLSELPVIPGVNAEIFEELEGHIITAMSLYDARNVVKNGDFNNGLTCWNVKGHVDVQQSHHRSDLVIPEWEAEVSQAVRVCPGRGYILRVTAYKEGYGEGCVTIHEIENNTDELKFKNCEEEEVYPTDTGTCNDYTAHQGTAACNSRNAGYEDAYEVDTTASVNYKPTYEEETYTDVRRDNHCEYDRGYVNYPPVPAGYVTKELEYFPETDTVWIEIGETEGKFIVDSVELLLMEE.

This sequence belongs to the delta endotoxin family.

Functionally, promotes colloidosmotic lysis by binding to the midgut epithelial cells of many lepidopteran larvae. The protein is Pesticidal crystal protein Cry1Bb (cry1Bb) of Bacillus thuringiensis.